Here is a 255-residue protein sequence, read N- to C-terminus: 1-(5-phosphoribosyl)-5-[(5-phosphoribosylamino)methylideneamino] imidazole-4-carboxamide isomerase (255 aa).

The Proton acceptor role is filled by Asp8. Asp129 serves as the catalytic Proton donor.

This sequence belongs to the HisA/HisF family.

It is found in the cytoplasm. It catalyses the reaction 1-(5-phospho-beta-D-ribosyl)-5-[(5-phospho-beta-D-ribosylamino)methylideneamino]imidazole-4-carboxamide = 5-[(5-phospho-1-deoxy-D-ribulos-1-ylimino)methylamino]-1-(5-phospho-beta-D-ribosyl)imidazole-4-carboxamide. It participates in amino-acid biosynthesis; L-histidine biosynthesis; L-histidine from 5-phospho-alpha-D-ribose 1-diphosphate: step 4/9. In Prochlorococcus marinus (strain MIT 9515), this protein is 1-(5-phosphoribosyl)-5-[(5-phosphoribosylamino)methylideneamino] imidazole-4-carboxamide isomerase.